Here is a 466-residue protein sequence, read N- to C-terminus: Siroheme synthase (466 aa).

The tract at residues 1–203 (MNYLPIFIDI…GKIQEAKADL (203 aa)) is precorrin-2 dehydrogenase /sirohydrochlorin ferrochelatase. NAD(+)-binding positions include 22–23 (SI) and 43–44 (KS). Residue Ser-128 is modified to Phosphoserine. The uroporphyrinogen-III C-methyltransferase stretch occupies residues 216 to 466 (GAVYLVGGGP…FDAKPISSKK (251 aa)). Pro-225 provides a ligand contact to S-adenosyl-L-methionine. Asp-248 acts as the Proton acceptor in catalysis. The active-site Proton donor is the Lys-270. S-adenosyl-L-methionine-binding positions include 301 to 303 (GGD), Ile-306, 331 to 332 (TA), Met-383, and Gly-412.

In the N-terminal section; belongs to the precorrin-2 dehydrogenase / sirohydrochlorin ferrochelatase family. It in the C-terminal section; belongs to the precorrin methyltransferase family.

It carries out the reaction uroporphyrinogen III + 2 S-adenosyl-L-methionine = precorrin-2 + 2 S-adenosyl-L-homocysteine + H(+). The enzyme catalyses precorrin-2 + NAD(+) = sirohydrochlorin + NADH + 2 H(+). The catalysed reaction is siroheme + 2 H(+) = sirohydrochlorin + Fe(2+). It participates in cofactor biosynthesis; adenosylcobalamin biosynthesis; precorrin-2 from uroporphyrinogen III: step 1/1. Its pathway is cofactor biosynthesis; adenosylcobalamin biosynthesis; sirohydrochlorin from precorrin-2: step 1/1. It functions in the pathway porphyrin-containing compound metabolism; siroheme biosynthesis; precorrin-2 from uroporphyrinogen III: step 1/1. The protein operates within porphyrin-containing compound metabolism; siroheme biosynthesis; siroheme from sirohydrochlorin: step 1/1. It participates in porphyrin-containing compound metabolism; siroheme biosynthesis; sirohydrochlorin from precorrin-2: step 1/1. Functionally, multifunctional enzyme that catalyzes the SAM-dependent methylations of uroporphyrinogen III at position C-2 and C-7 to form precorrin-2 via precorrin-1. Then it catalyzes the NAD-dependent ring dehydrogenation of precorrin-2 to yield sirohydrochlorin. Finally, it catalyzes the ferrochelation of sirohydrochlorin to yield siroheme. This Vesicomyosocius okutanii subsp. Calyptogena okutanii (strain HA) protein is Siroheme synthase.